A 190-amino-acid chain; its full sequence is Ribosome hibernation promotion factor (190 aa).

This sequence belongs to the HPF/YfiA ribosome-associated protein family. Long HPF subfamily. Interacts with 100S ribosomes.

It is found in the cytoplasm. In terms of biological role, required for dimerization of active 70S ribosomes into 100S ribosomes in stationary phase; 100S ribosomes are translationally inactive and sometimes present during exponential growth. The protein is Ribosome hibernation promotion factor of Staphylococcus saprophyticus subsp. saprophyticus (strain ATCC 15305 / DSM 20229 / NCIMB 8711 / NCTC 7292 / S-41).